Consider the following 78-residue polypeptide: Large ribosomal subunit protein bL28 (78 aa).

The interval 1-31 (MAAHCQVTGAEPGFGHSISHSHRRNKRRFDP) is disordered.

It belongs to the bacterial ribosomal protein bL28 family.

The sequence is that of Large ribosomal subunit protein bL28 from Pseudarthrobacter chlorophenolicus (strain ATCC 700700 / DSM 12829 / CIP 107037 / JCM 12360 / KCTC 9906 / NCIMB 13794 / A6) (Arthrobacter chlorophenolicus).